We begin with the raw amino-acid sequence, 201 residues long: dITP/XTP pyrophosphatase (201 aa).

9–14 (SNNAGK) contacts substrate. Mg(2+)-binding residues include Glu41 and Asp70. Residue Asp70 is the Proton acceptor of the active site. Substrate contacts are provided by residues Ser71, 155–158 (FGYD), Lys178, and 183–184 (HR).

This sequence belongs to the HAM1 NTPase family. As to quaternary structure, homodimer. Mg(2+) is required as a cofactor.

The enzyme catalyses XTP + H2O = XMP + diphosphate + H(+). It catalyses the reaction dITP + H2O = dIMP + diphosphate + H(+). The catalysed reaction is ITP + H2O = IMP + diphosphate + H(+). In terms of biological role, pyrophosphatase that catalyzes the hydrolysis of nucleoside triphosphates to their monophosphate derivatives, with a high preference for the non-canonical purine nucleotides XTP (xanthosine triphosphate), dITP (deoxyinosine triphosphate) and ITP. Seems to function as a house-cleaning enzyme that removes non-canonical purine nucleotides from the nucleotide pool, thus preventing their incorporation into DNA/RNA and avoiding chromosomal lesions. The chain is dITP/XTP pyrophosphatase from Methylococcus capsulatus (strain ATCC 33009 / NCIMB 11132 / Bath).